A 459-amino-acid chain; its full sequence is Mitochondrial distribution and morphology protein 34 (459 aa).

One can recognise an SMP-LTD domain in the interval 1–190 (MSFRFNEAVF…LPSLIFNTSQ (190 aa)). The segment covering 338–347 (RSNSNDDNAK) has biased composition (basic and acidic residues). The interval 338 to 375 (RSNSNDDNAKPRRRKIKCKKTRTPSNLQSQGEQAVDDS) is disordered. Basic residues predominate over residues 348–359 (PRRRKIKCKKTR).

The protein belongs to the MDM34 family. As to quaternary structure, component of the ER-mitochondria encounter structure (ERMES) or MDM complex, composed of MMM1, MDM10, MDM12 and MDM34. Ubiquitinated by a SCF (SKP1-CUL1-F-box protein) E3 ubiquitin-protein ligase complex containing the F-box protein MDM30. Ubiquitination is important for mitochondrial integrity.

Its subcellular location is the mitochondrion outer membrane. Its function is as follows. Component of the ERMES/MDM complex, which serves as a molecular tether to connect the endoplasmic reticulum (ER) and mitochondria. Components of this complex are involved in the control of mitochondrial shape and protein biogenesis, and function in nonvesicular lipid trafficking between the ER and mitochondria. MDM34 is required for the interaction of the ER-resident membrane protein MMM1 and the outer mitochondrial membrane-resident beta-barrel protein MDM10. This chain is Mitochondrial distribution and morphology protein 34, found in Saccharomyces cerevisiae (strain YJM789) (Baker's yeast).